Reading from the N-terminus, the 426-residue chain is 3-phosphoshikimate 1-carboxyvinyltransferase (426 aa).

3-phosphoshikimate is bound by residues K22, S23, and R27. K22 serves as a coordination point for phosphoenolpyruvate. 2 residues coordinate phosphoenolpyruvate: G96 and R124. Residues S170, S171, Q172, S198, D314, N337, and K341 each contribute to the 3-phosphoshikimate site. Q172 serves as a coordination point for phosphoenolpyruvate. Catalysis depends on D314, which acts as the Proton acceptor. Phosphoenolpyruvate contacts are provided by R345, R387, and K412.

It belongs to the EPSP synthase family. Monomer.

It is found in the cytoplasm. It carries out the reaction 3-phosphoshikimate + phosphoenolpyruvate = 5-O-(1-carboxyvinyl)-3-phosphoshikimate + phosphate. It functions in the pathway metabolic intermediate biosynthesis; chorismate biosynthesis; chorismate from D-erythrose 4-phosphate and phosphoenolpyruvate: step 6/7. Catalyzes the transfer of the enolpyruvyl moiety of phosphoenolpyruvate (PEP) to the 5-hydroxyl of shikimate-3-phosphate (S3P) to produce enolpyruvyl shikimate-3-phosphate and inorganic phosphate. The chain is 3-phosphoshikimate 1-carboxyvinyltransferase from Shewanella loihica (strain ATCC BAA-1088 / PV-4).